The sequence spans 158 residues: MAEEDHTFETADAGAALTFPMQCSALRKNGHVVIKNRPCKIVDMSTSKTGKHGHAKVHLVAIDIFTGKKLEDLSPSTHNMEVPNVSRQEFQLLDIDDGYLSLMTADGDTKDDVKVPEGELGDKLQSEFDEGKDLIVTIISAMGEEAAISYKEAPKGSA.

At Lys51 the chain carries Hypusine.

Belongs to the eIF-5A family. Post-translationally, lys-51 undergoes hypusination, a unique post-translational modification that consists in the addition of a butylamino group from spermidine to lysine side chain, leading to the formation of the unusual amino acid hypusine. eIF-5As are the only known proteins to undergo this modification, which is essential for their function.

It localises to the cytoplasm. Translation factor that promotes translation elongation and termination, particularly upon ribosome stalling at specific amino acid sequence contexts. Binds between the exit (E) and peptidyl (P) site of the ribosome and promotes rescue of stalled ribosome: specifically required for efficient translation of polyproline-containing peptides as well as other motifs that stall the ribosome. Acts as a ribosome quality control (RQC) cofactor by joining the RQC complex to facilitate peptidyl transfer during CAT tailing step. This chain is Eukaryotic translation initiation factor 5A (ANB1), found in Candida albicans (strain SC5314 / ATCC MYA-2876) (Yeast).